Reading from the N-terminus, the 219-residue chain is Octanoyltransferase (219 aa).

The 189-residue stretch at 31-219 (EDLPGFLVFC…KLKRRLLEVL (189 aa)) folds into the BPL/LPL catalytic domain. Residues 69–76 (RGGRATYH), 153–155 (SVG), and 166–168 (GAA) contribute to the substrate site. Residue Cys-184 is the Acyl-thioester intermediate of the active site.

It belongs to the LipB family.

Its subcellular location is the cytoplasm. It catalyses the reaction octanoyl-[ACP] + L-lysyl-[protein] = N(6)-octanoyl-L-lysyl-[protein] + holo-[ACP] + H(+). It participates in protein modification; protein lipoylation via endogenous pathway; protein N(6)-(lipoyl)lysine from octanoyl-[acyl-carrier-protein]: step 1/2. In terms of biological role, catalyzes the transfer of endogenously produced octanoic acid from octanoyl-acyl-carrier-protein onto the lipoyl domains of lipoate-dependent enzymes. Lipoyl-ACP can also act as a substrate although octanoyl-ACP is likely to be the physiological substrate. In Bdellovibrio bacteriovorus (strain ATCC 15356 / DSM 50701 / NCIMB 9529 / HD100), this protein is Octanoyltransferase.